Reading from the N-terminus, the 270-residue chain is Outer membrane protein P.IIC (270 aa).

An N-terminal signal peptide occupies residues 1-25 (MQPAKNLLFSSLLFSSLLFSSAARA). The Extracellular segment spans residues 26-35 (ASEDGGRGPY). A beta stranded membrane pass occupies residues 36–44 (VQADLAYAA). At 45 to 76 (ERITHDYPKPTGTGKNKISTVSDYFRNIRTHS) the chain is on the periplasmic side. A beta stranded transmembrane segment spans residues 77–85 (VHPRVSVGY). The Extracellular portion of the chain corresponds to 86-89 (DFGS). The chain crosses the membrane as a beta stranded span at residues 90–96 (WRIAADY). Topologically, residues 97 to 142 (ARYRKWNNNKYSVSIKELLRNDNSASGVRGHLNIQTQKTEHQENGT) are periplasmic. A beta stranded membrane pass occupies residues 143–157 (FHAVSSLGLSTIYDF). Residues 158-162 (DTGSR) lie on the Extracellular side of the membrane. A beta stranded membrane pass occupies residues 163–173 (FKPYIGMRVAY). Residues 174–221 (GHVRHQVRSVEQETEIITTYPSNGGGKVSLSSKMPPKSAHHQSNSIRR) are Periplasmic-facing. The tract at residues 194 to 217 (PSNGGGKVSLSSKMPPKSAHHQSN) is disordered. The beta stranded transmembrane segment at 222–234 (VGLGVIAGVGFDI) threads the bilayer. The Extracellular segment spans residues 235–237 (TPN). A beta stranded membrane pass occupies residues 238 to 246 (LTLDTGYRY). Residues 247–261 (HNWGRLENTRFKTHE) are Periplasmic-facing. Residues 262–270 (ASLGMRYRF) traverse the membrane as a beta stranded segment.

The protein belongs to the opacity porin family. As to quaternary structure, homotrimer.

Its subcellular location is the cell outer membrane. Its function is as follows. This protein serves as a porin. This chain is Outer membrane protein P.IIC (piiC), found in Neisseria gonorrhoeae.